The chain runs to 444 residues: Glutamyl-tRNA reductase (444 aa).

Residues 49–52, Ser109, 114–116, and Gln120 each bind substrate; these read TCNR and ETQ. Cys50 (nucleophile) is an active-site residue. 189–194 serves as a coordination point for NADP(+); the sequence is GAGKMG.

The protein belongs to the glutamyl-tRNA reductase family. As to quaternary structure, homodimer.

It catalyses the reaction (S)-4-amino-5-oxopentanoate + tRNA(Glu) + NADP(+) = L-glutamyl-tRNA(Glu) + NADPH + H(+). Its pathway is porphyrin-containing compound metabolism; protoporphyrin-IX biosynthesis; 5-aminolevulinate from L-glutamyl-tRNA(Glu): step 1/2. Its function is as follows. Catalyzes the NADPH-dependent reduction of glutamyl-tRNA(Glu) to glutamate 1-semialdehyde (GSA). The sequence is that of Glutamyl-tRNA reductase from Bacillus cereus (strain ATCC 14579 / DSM 31 / CCUG 7414 / JCM 2152 / NBRC 15305 / NCIMB 9373 / NCTC 2599 / NRRL B-3711).